The following is a 574-amino-acid chain: Sulfate adenylyltransferase (574 aa).

The tract at residues 1 to 170 (MANTPHGGVL…LEAINRLEHY (170 aa)) is N-terminal. Residues 171–395 (DFLDLRFTPS…LREENPLPAE (225 aa)) form a catalytic region. Sulfate is bound at residue Gln198. ATP is bound by residues 198-201 (QTRN) and 292-295 (GRDH). Catalysis depends on residues Thr199, Arg200, and Asn201. Arg200 lines the sulfate pocket. Ala296 lines the sulfate pocket. Residue Met334 participates in ATP binding. The allosteric regulation domain; adenylyl-sulfate kinase-like stretch occupies residues 396–574 (KGFTVFMTGY…LESNGLLDRL (179 aa)). Residues 435–438 (ENVR), Arg452, 478–479 (IA), and Lys516 each bind 3'-phosphoadenylyl sulfate.

The protein in the N-terminal section; belongs to the sulfate adenylyltransferase family. In the C-terminal section; belongs to the APS kinase family. In terms of assembly, homohexamer. Dimer of trimers.

The protein localises to the cytoplasm. The catalysed reaction is sulfate + ATP + H(+) = adenosine 5'-phosphosulfate + diphosphate. Its pathway is sulfur metabolism; hydrogen sulfide biosynthesis; sulfite from sulfate: step 1/3. Its activity is regulated as follows. Allosterically inhibited by 3'-phosphoadenosine 5'-phosphosulfate (PAPS). Functionally, catalyzes the first intracellular reaction of sulfate assimilation, forming adenosine-5'-phosphosulfate (APS) from inorganic sulfate and ATP. Plays an important role in sulfate activation as a component of the biosynthesis pathway of sulfur-containing amino acids. This chain is Sulfate adenylyltransferase, found in Gibberella zeae (strain ATCC MYA-4620 / CBS 123657 / FGSC 9075 / NRRL 31084 / PH-1) (Wheat head blight fungus).